We begin with the raw amino-acid sequence, 196 residues long: NADH dehydrogenase [ubiquinone] 1 alpha subcomplex assembly factor 3 (196 aa).

The transit peptide at 1–93 (MIARTLRTVG…RSVLSWNVNS (93 aa)) directs the protein to the mitochondrion.

It belongs to the NDUFAF3 family. In terms of assembly, together with NdufAF4 associates with mitochondrial complex I assembly intermediates during its biogenesis.

It is found in the mitochondrion. Its function is as follows. Involved in the assembly of mitochondrial NADH:ubiquinone oxidoreductase complex (complex I). Together with NdufAF4, involved in biogenesis of complex 1 modules N, Q and P-peripheral, but not the P-distal module. Required for recruitment of the complex I assembly factor Timmdc1 to complex 1 assembly intermediates. This Drosophila melanogaster (Fruit fly) protein is NADH dehydrogenase [ubiquinone] 1 alpha subcomplex assembly factor 3.